A 324-amino-acid polypeptide reads, in one-letter code: Biotin synthase (324 aa).

The region spanning 37–264 (NEVQVAALMN…ASYVRLAAGR (228 aa)) is the Radical SAM core domain. Residues Cys-52, Cys-56, and Cys-59 each contribute to the [4Fe-4S] cluster site. 4 residues coordinate [2Fe-2S] cluster: Cys-96, Cys-127, Cys-187, and Arg-259.

It belongs to the radical SAM superfamily. Biotin synthase family. As to quaternary structure, homodimer. Requires [4Fe-4S] cluster as cofactor. It depends on [2Fe-2S] cluster as a cofactor.

It catalyses the reaction (4R,5S)-dethiobiotin + (sulfur carrier)-SH + 2 reduced [2Fe-2S]-[ferredoxin] + 2 S-adenosyl-L-methionine = (sulfur carrier)-H + biotin + 2 5'-deoxyadenosine + 2 L-methionine + 2 oxidized [2Fe-2S]-[ferredoxin]. It functions in the pathway cofactor biosynthesis; biotin biosynthesis; biotin from 7,8-diaminononanoate: step 2/2. Its function is as follows. Catalyzes the conversion of dethiobiotin (DTB) to biotin by the insertion of a sulfur atom into dethiobiotin via a radical-based mechanism. In Anaplasma marginale (strain Florida), this protein is Biotin synthase.